Consider the following 246-residue polypeptide: Orotidine 5'-phosphate decarboxylase (246 aa).

Residues D22, K44, 71-80 (DLKYHDIPHT), T130, R191, Q201, G221, and R222 each bind substrate. K73 (proton donor) is an active-site residue.

The protein belongs to the OMP decarboxylase family. Type 1 subfamily. Homodimer.

It catalyses the reaction orotidine 5'-phosphate + H(+) = UMP + CO2. It participates in pyrimidine metabolism; UMP biosynthesis via de novo pathway; UMP from orotate: step 2/2. Its function is as follows. Catalyzes the decarboxylation of orotidine 5'-monophosphate (OMP) to uridine 5'-monophosphate (UMP). In Neisseria gonorrhoeae (strain ATCC 700825 / FA 1090), this protein is Orotidine 5'-phosphate decarboxylase.